A 340-amino-acid polypeptide reads, in one-letter code: N(4)-(Beta-N-acetylglucosaminyl)-L-asparaginase (340 aa).

Positions 1-45 are cleaved as a signal peptide; sequence MRIIYKQQTMNNNRRDFIKKLGIATAAIAINPLEAKNLLDTSEPK. Threonine 197 acts as the Nucleophile in catalysis. Substrate is bound by residues 225 to 228 and 248 to 251; these read RVGD and TGHG.

This sequence belongs to the Ntn-hydrolase family. Heterotetramer of two alpha and two beta chains arranged as a dimer of alpha/beta heterodimers. Post-translationally, cleaved into an alpha and beta chain by autocatalysis; this activates the enzyme. The N-terminal residue of the beta subunit is responsible for the nucleophile hydrolase activity.

It localises to the periplasm. The enzyme catalyses N(4)-(beta-N-acetyl-D-glucosaminyl)-L-asparagine + H2O = N-acetyl-beta-D-glucosaminylamine + L-aspartate + H(+). Functionally, cleaves the GlcNAc-Asn bond which joins oligosaccharides to the peptide of asparagine-linked glycoproteins. Requires that the glycosylated asparagine moiety is not substituted on its N-(R1) and C- (R2) terminus. In Elizabethkingia miricola (Chryseobacterium miricola), this protein is N(4)-(Beta-N-acetylglucosaminyl)-L-asparaginase.